The chain runs to 723 residues: Zinc finger CCCH domain-containing protein 11A (723 aa).

C3H1-type zinc fingers lie at residues 2-29, 31-57, and 60-87; these read SKQGDDCYFYFYSTCNKGDNCPFRHCEA, LGNETICTLWKEGRCFRNVCRFRHMEI, and KRSEIPCFWENQPGGCQKSNCAFHHTKG. Disordered stretches follow at residues 142–208, 223–256, 404–428, 450–526, and 565–681; these read ENSE…KQDD, KKQKEKTKKQSEGPSGVPAHPLQSRTVPVPEKEN, KRAEGERKKQRILPPSVPGKVKLEE, EKAL…VKSL, and VKPS…APLS. The span at 160 to 175 shows a compositional bias: acidic residues; it reads ADDDEDDDDQLSEEGE. Positions 376-411 form a coiled coil; sequence KTFSEALAERKQRRLEEEKQKLEEFLTEKRAEGERK. The segment covering 511–522 has biased composition (polar residues); that stretch reads PSNQSAPNSKAQ. Low complexity predominate over residues 609–620; sequence KKAALTAAPALP. Residues 637–649 are compositionally biased toward polar residues; sequence LELQLGSQADSVE. Residues 650 to 672 show a composition bias toward low complexity; that stretch reads QSGDSSSASASSQSVAKAQQLSS.

It is found in the nucleus speckle. Its function is as follows. Through its association with TREX complex components, may participate in the export and post-transcriptional coordination of selected mRNA transcripts. Binds RNA. The polypeptide is Zinc finger CCCH domain-containing protein 11A (ZC3H11A) (Gallus gallus (Chicken)).